We begin with the raw amino-acid sequence, 949 residues long: MAM domain-containing glycosylphosphatidylinositol anchor protein 1 (949 aa).

The first 18 residues, 1–18 (MEMICVLFLSLVPAYSRG), serve as a signal peptide directing secretion. Ig-like domains are found at residues 24–125 (PAQA…IRVD) and 132–230 (PVLT…KSIT). 2 N-linked (GlcNAc...) asparagine glycosylation sites follow: asparagine 42 and asparagine 90. Intrachain disulfides connect cysteine 60–cysteine 108 and cysteine 157–cysteine 214. 6 N-linked (GlcNAc...) asparagine glycosylation sites follow: asparagine 235, asparagine 247, asparagine 257, asparagine 292, asparagine 307, and asparagine 331. The 84-residue stretch at 240–323 (PALKLSVNET…VGNPAKKTVN (84 aa)) folds into the Ig-like 3 domain. Residues cysteine 262 and cysteine 308 are joined by a disulfide bond. Ig-like domains are found at residues 338–432 (PDVI…VEVN), 440–531 (PTIS…ALVQ), and 537–625 (PPVV…FQVS). Cysteines 357 and 415 form a disulfide. The N-linked (GlcNAc...) asparagine glycan is linked to asparagine 432. Intrachain disulfides connect cysteine 463-cysteine 513 and cysteine 559-cysteine 609. Asparagine 577, asparagine 649, and asparagine 820 each carry an N-linked (GlcNAc...) asparagine glycan. The region spanning 637–737 (TPNPTLSQKQ…ARIIRYMEPI (101 aa)) is the Fibronectin type-III domain. The MAM domain maps to 745–912 (NTCRFEDEKI…VTLKKGDCPR (168 aa)). Serine 926 is lipidated: GPI-anchor amidated serine. A propeptide spans 927 to 949 (GVSAQHGPCLCGPLTFFLYVLLR) (removed in mature form).

Interacts heterophilically through its MAM domain with proteins in axon-rich regions and through its Ig-like domains with proteins in differentiating muscle. In the embryonic brachial spinal cord, selectively expressed by medial lateral motor column neurons, some populations of dorsal root ganglion neurons, and interneurons.

It is found in the cell membrane. Required for radial migration of cortical neurons in the superficial layer of the neocortex. This is MAM domain-containing glycosylphosphatidylinositol anchor protein 1 from Gallus gallus (Chicken).